Consider the following 186-residue polypeptide: Ribosome rescue factor SmrB (186 aa).

Positions 99–174 (IDLHGLTQHQ…SDAAIIVIIE (76 aa)) constitute a Smr domain.

Belongs to the SmrB family. Associates with collided ribosomes, but not with correctly translating polysomes.

In terms of biological role, acts as a ribosome collision sensor. Detects stalled/collided disomes (pairs of ribosomes where the leading ribosome is stalled and a second ribosome has collided with it) and endonucleolytically cleaves mRNA at the 5' boundary of the stalled ribosome. Stalled/collided disomes form a new interface (primarily via the 30S subunits) that binds SmrB. Cleaved mRNA becomes available for tmRNA ligation, leading to ribosomal subunit dissociation and rescue of stalled ribosomes. This chain is Ribosome rescue factor SmrB, found in Buchnera aphidicola subsp. Acyrthosiphon pisum (strain Tuc7).